Here is a 393-residue protein sequence, read N- to C-terminus: NAD(P)H-quinone oxidoreductase subunit H, chloroplastic (393 aa).

The protein belongs to the complex I 49 kDa subunit family. NDH is composed of at least 16 different subunits, 5 of which are encoded in the nucleus.

It is found in the plastid. It localises to the chloroplast thylakoid membrane. It carries out the reaction a plastoquinone + NADH + (n+1) H(+)(in) = a plastoquinol + NAD(+) + n H(+)(out). The enzyme catalyses a plastoquinone + NADPH + (n+1) H(+)(in) = a plastoquinol + NADP(+) + n H(+)(out). In terms of biological role, NDH shuttles electrons from NAD(P)H:plastoquinone, via FMN and iron-sulfur (Fe-S) centers, to quinones in the photosynthetic chain and possibly in a chloroplast respiratory chain. The immediate electron acceptor for the enzyme in this species is believed to be plastoquinone. Couples the redox reaction to proton translocation, and thus conserves the redox energy in a proton gradient. The protein is NAD(P)H-quinone oxidoreductase subunit H, chloroplastic of Solanum bulbocastanum (Wild potato).